The chain runs to 496 residues: Cytochrome P450 3A56 (496 aa).

Residue Cys441 coordinates heme.

Belongs to the cytochrome P450 family. The cofactor is heme. Highly expressed in liver and intestine. Moderate expression in gill and spleen. Low expression in kidney, brain and heart.

Its subcellular location is the endoplasmic reticulum membrane. It localises to the microsome membrane. It carries out the reaction an organic molecule + reduced [NADPH--hemoprotein reductase] + O2 = an alcohol + oxidized [NADPH--hemoprotein reductase] + H2O + H(+). Functionally, putative steroid 6-beta-hydroxylase. This is Cytochrome P450 3A56 (cyp3a56) from Fundulus heteroclitus (Killifish).